Here is a 986-residue protein sequence, read N- to C-terminus: Leucine-rich repeat receptor-like kinase protein HAR1 (986 aa).

The first 25 residues, 1–25 (MRIRVSYLLVLCFTLIWFRWTVVYS), serve as a signal peptide directing secretion. LRR repeat units lie at residues 71–97 (DQNLRVVALNVTLVPLFGHLPPEIGLL), 98–121 (EKLENLTISMNNLTDQLPSDLASL), 123–145 (SLKVLNISHNLFSGQFPGNITVG), 146–170 (MTELEALDAYDNSFSGPLPEEIVKL), 171–196 (EKLKYLHLAGNYFSGTIPESYSEFQS), 198–218 (EFLGLNANSLTGRVPESLAKL), 243–267 (MENLRLLEMANCNLTGEIPPSLGNL), 268–291 (TKLHSLFVQMNNLTGTIPPELSSM), 293–314 (SLMSLDLSINDLTGEIPESFSK), 316–339 (KNLTLMNFFQNKFRGSLPSFIGDL), 340–363 (PNLETLQVWENNFSFVLPHNLGGN), 365–387 (RFLYFDVTKNHLTGLIPPDLCKS), 388–411 (GRLKTFIITDNFFRGPIPKGIGEC), 412–435 (RSLTKIRVANNFLDGPVPPGVFQL), 437–458 (SVTITELSNNRLNGELPSVISG), 459–482 (ESLGTLTLSNNLFTGKIPAAMKNL), 483–506 (RALQSLSLDANEFIGEIPGGVFEI), 508–530 (MLTKVNISGNNLTGPIPTTITHR), 531–554 (ASLTAVDLSRNNLAGEVPKGMKNL), 555–578 (MDLSILNLSRNEISGPVPDEIRFM), and 579–603 (TSLTTLDLSSNNFTGTVPTGGQFLV). 5 N-linked (GlcNAc...) asparagine glycosylation sites follow: Asn-80, Asn-102, Asn-109, Asn-128, and Asn-141. Residues Asn-255, Asn-266, and Asn-279 are each glycosylated (N-linked (GlcNAc...) asparagine). N-linked (GlcNAc...) asparagine glycosylation is found at Asn-317 and Asn-351. 2 N-linked (GlcNAc...) asparagine glycosylation sites follow: Asn-513 and Asn-518. Residues Asn-561 and Asn-590 are each glycosylated (N-linked (GlcNAc...) asparagine). Residues 645-665 (IVIGIALATAVLLVAVTVHVV) traverse the membrane as a helical segment. Positions 695-971 (LKEENIIGKG…TMREVVHMLT (277 aa)) constitute a Protein kinase domain. Residues 701-709 (IGKGGAGIV) and Lys-723 contribute to the ATP site. Asp-820 functions as the Proton acceptor in the catalytic mechanism.

Belongs to the protein kinase superfamily. Ser/Thr protein kinase family. In terms of tissue distribution, expressed in roots, leaves, stems and flowers.

It localises to the cell membrane. It carries out the reaction L-seryl-[protein] + ATP = O-phospho-L-seryl-[protein] + ADP + H(+). The catalysed reaction is L-threonyl-[protein] + ATP = O-phospho-L-threonyl-[protein] + ADP + H(+). LRR receptor kinase involved in the regulation of root and shoot growth, and root nodule organogenesis. Involved in long distance nodulation signaling events. Involved in the autoregulation of nodulation (AON), a long distance systemic signaling from root to shoot and back again, which allows legumes to limit the number of root nodules formed based on available nitrogen and previous rhizobial colonization. Acts from shoot to root to control AON. Involved in the regulation of root colonization by arbuscular mycorrhizal (AM) fungi. This is Leucine-rich repeat receptor-like kinase protein HAR1 from Lotus japonicus (Lotus corniculatus var. japonicus).